Reading from the N-terminus, the 497-residue chain is Pseudooxynicotine dehydrogenase (497 aa).

The tat-type signal signal peptide spans 1 to 43 (MANDKGDISKDGVSRRKFLGGAVIGAAAAAGVGSQILSLSATA). Positions 70, 89, 97, 114, 286, 462, and 472 each coordinate FAD.

The protein belongs to the flavin monoamine oxidase family. In terms of assembly, homodimer. FAD is required as a cofactor. Post-translationally, predicted to be exported by the Tat system. The position of the signal peptide cleavage has not been experimentally proven.

It is found in the periplasm. The catalysed reaction is pseudooxynicotine + 2 Fe(III)-[cytochrome c] + H2O = 4-oxo-4-(pyridin-3-yl)butanal + methylamine + 2 Fe(II)-[cytochrome c] + 2 H(+). The protein operates within alkaloid degradation; nicotine degradation. Its activity is regulated as follows. Strongly inhibited by Ag(+), Co(2+), Cu(2+) and Hg(2+). In terms of biological role, involved in nicotine degradation. Catalyzes the deamination of pseudooxynicotine to 3-succinoylsemialdehyde-pyridine. This is Pseudooxynicotine dehydrogenase from Pseudomonas sp.